We begin with the raw amino-acid sequence, 805 residues long: Mitochondrial intermediate peptidase (805 aa).

A mitochondrion-targeting transit peptide spans 1-25; the sequence is MIQPLVKASRPRLWVCSDCLLRRTL. Zn(2+) is bound at residue H578. E579 is an active-site residue. H582 and H585 together coordinate Zn(2+).

It belongs to the peptidase M3 family. Requires Zn(2+) as cofactor.

It is found in the mitochondrion matrix. It catalyses the reaction Release of an N-terminal octapeptide as second stage of processing of some proteins imported into the mitochondrion.. Cleaves proteins, imported into the mitochondrion, to their mature size. While most mitochondrial precursor proteins are processed to the mature form in one step by mitochondrial processing peptidase (MPP), the sequential cleavage by MIP of an octapeptide after initial processing by MPP is a required step for a subgroup of nuclear-encoded precursor proteins destined for the matrix or the inner membrane. This is Mitochondrial intermediate peptidase (oct-1) from Neurospora crassa (strain ATCC 24698 / 74-OR23-1A / CBS 708.71 / DSM 1257 / FGSC 987).